Here is a 171-residue protein sequence, read N- to C-terminus: Translationally-controlled tumor protein homolog (171 aa).

In terms of domain architecture, TCTP spans 1–171; that stretch reads MKIWKDVFTG…FKHGLEEEKF (171 aa).

This sequence belongs to the TCTP family.

It localises to the cytoplasm. In terms of biological role, involved in calcium binding and microtubule stabilization. The protein is Translationally-controlled tumor protein homolog of Anopheles gambiae (African malaria mosquito).